The sequence spans 319 residues: Tetrahydromethanopterin S-methyltransferase subunit H (319 aa).

Belongs to the MtrH family. In terms of assembly, the complex is composed of 8 subunits; MtrA, MtrB, MtrC, MtrD, MtrE, MtrF, MtrG and MtrH.

It catalyses the reaction 5-methyl-5,6,7,8-tetrahydromethanopterin + coenzyme M + 2 Na(+)(in) = 5,6,7,8-tetrahydromethanopterin + methyl-coenzyme M + 2 Na(+)(out). Its pathway is one-carbon metabolism; methanogenesis from CO(2); methyl-coenzyme M from 5,10-methylene-5,6,7,8-tetrahydromethanopterin: step 2/2. Part of a complex that catalyzes the formation of methyl-coenzyme M and tetrahydromethanopterin from coenzyme M and methyl-tetrahydromethanopterin. This is an energy-conserving, sodium-ion translocating step. MtrH catalyzes the transfer of the methyl group from methyl-tetrahydromethanopterin to the corrinoid prosthetic group of MtrA. The chain is Tetrahydromethanopterin S-methyltransferase subunit H from Methanococcus aeolicus (strain ATCC BAA-1280 / DSM 17508 / OCM 812 / Nankai-3).